Here is a 208-residue protein sequence, read N- to C-terminus: Methionine-R-sulfoxide reductase B1 (208 aa).

A compositionally biased stretch (basic and acidic residues) spans 27-36 (QDSDNPDKRY). Residues 27–48 (QDSDNPDKRYSGPAATMDNKSE) form a disordered region. Residues 54–188 (KEELRKRLTP…NSASIEFVNA (135 aa)) form the MsrB domain. Cys93, Cys96, Cys154, and Cys157 together coordinate Zn(2+). Residues Cys111 and Cys177 are joined by a disulfide bond. The active-site Nucleophile is the Cys177. The tract at residues 189 to 208 (DPATSSPPVATPTAAPIAQQ) is disordered.

It belongs to the MsrB Met sulfoxide reductase family. The cofactor is Zn(2+). As to expression, present in the embryonic nervous system (brain and cord) in neuronal cell bodies, along axons. Also present in embryonic muscles in motor axons. Localizes to growing bristle tips where it is distributed in small puntae. Present at and at sites of actin localization.

It localises to the cytoplasm. The protein resides in the nucleus. It is found in the cytoskeleton. The catalysed reaction is L-methionyl-[protein] + [thioredoxin]-disulfide + H2O = L-methionyl-(R)-S-oxide-[protein] + [thioredoxin]-dithiol. In terms of biological role, methionine-sulfoxide reductase that specifically reduces methionine (R)-sulfoxide back to methionine. While in many cases methionine oxidation is the result of random oxidation following oxidative stress, methionine oxidation is also a post-translational modification that takes place on specific residues. Acts as a regulator of actin assembly by reducing methionine (R)-sulfoxide mediated by Mical on actin thereby promoting filament repolymerization. The chain is Methionine-R-sulfoxide reductase B1 (SelR) from Drosophila melanogaster (Fruit fly).